Consider the following 277-residue polypeptide: Phosphonoacetaldehyde hydrolase (277 aa).

Aspartate 20 (nucleophile) is an active-site residue. 2 residues coordinate Mg(2+): aspartate 20 and alanine 22. Lysine 61 (schiff-base intermediate with substrate) is an active-site residue. Residue aspartate 194 participates in Mg(2+) binding.

This sequence belongs to the HAD-like hydrolase superfamily. PhnX family. Homodimer. Mg(2+) serves as cofactor.

It catalyses the reaction phosphonoacetaldehyde + H2O = acetaldehyde + phosphate + H(+). In terms of biological role, involved in phosphonate degradation. In Syntrophobacter fumaroxidans (strain DSM 10017 / MPOB), this protein is Phosphonoacetaldehyde hydrolase.